A 311-amino-acid polypeptide reads, in one-letter code: MGDYPFQFPEFSSESLNETAKKFINYLKIEKNYSQNTINAYSIDLKFFFEFCEKEQLDIFQIEPVDIRSYFAYLAKKHEIDRRSQSRKLSSLRTFYKVLLREDLVKSNPATQLSFPKVRKEVPKNFRINETEEILEFESENASEVSEIRDRAMIEVLYSSGLRVFELVNAKLNSLSKDLTVLKVLGKGRKERFVYFGKEAVSSLQKYLEYRNVSFPDAEEIFLNQRGKKLTTRGVRYILNERRKKMGWEKTITPHKFRHTFATDLLDAGAEIRAVQELLGHSSLSTTQIYLSVSKEKIKEVYRKAHPHARK.

In terms of domain architecture, Core-binding (CB) spans 14–100 (ESLNETAKKF…SLRTFYKVLL (87 aa)). A Tyr recombinase domain is found at 121 to 303 (EVPKNFRINE…SKEKIKEVYR (183 aa)). Active-site residues include Arg163, Lys187, His255, Arg258, and His281. Tyr290 serves as the catalytic O-(3'-phospho-DNA)-tyrosine intermediate.

It belongs to the 'phage' integrase family. XerC subfamily. As to quaternary structure, forms a cyclic heterotetrameric complex composed of two molecules of XerC and two molecules of XerD.

Its subcellular location is the cytoplasm. Functionally, site-specific tyrosine recombinase, which acts by catalyzing the cutting and rejoining of the recombining DNA molecules. The XerC-XerD complex is essential to convert dimers of the bacterial chromosome into monomers to permit their segregation at cell division. It also contributes to the segregational stability of plasmids. This is Tyrosine recombinase XerC from Leptospira interrogans serogroup Icterohaemorrhagiae serovar copenhageni (strain Fiocruz L1-130).